The sequence spans 257 residues: Acetylglutamate kinase (257 aa).

Substrate-binding positions include 41 to 42 (GG), Arg-63, and Asn-158.

The protein belongs to the acetylglutamate kinase family. ArgB subfamily.

It localises to the cytoplasm. The enzyme catalyses N-acetyl-L-glutamate + ATP = N-acetyl-L-glutamyl 5-phosphate + ADP. The protein operates within amino-acid biosynthesis; L-arginine biosynthesis; N(2)-acetyl-L-ornithine from L-glutamate: step 2/4. Its function is as follows. Catalyzes the ATP-dependent phosphorylation of N-acetyl-L-glutamate. The protein is Acetylglutamate kinase of Bacteroides thetaiotaomicron (strain ATCC 29148 / DSM 2079 / JCM 5827 / CCUG 10774 / NCTC 10582 / VPI-5482 / E50).